The primary structure comprises 269 residues: MNFIVYPALDIRNGAVVRLQQGDYARQTRYDDQVLPRAQAFADSGATWMHLVDLDAAKAGGYTLAPLLRQITRATGLQVQTGGGVRSRDDVARILDAGAARVVIGSLAVRQMTCVIEWLQAFGPERITVALDTRQDAGGVWRLPVHGWTEVAEATLEALAQQYAAAGLRHLLCTDIARDGMLSGPNMDVYAYLRALVPAVQIQVSGGARDVADVVAAKMAGCAGIVLGKALLEGRLALKEAVQHGSVADPGDPLPCGELTEPVCRYRSV.

Aspartate 10 functions as the Proton acceptor in the catalytic mechanism. The active-site Proton donor is the aspartate 132.

Belongs to the HisA/HisF family.

Its subcellular location is the cytoplasm. The enzyme catalyses 1-(5-phospho-beta-D-ribosyl)-5-[(5-phospho-beta-D-ribosylamino)methylideneamino]imidazole-4-carboxamide = 5-[(5-phospho-1-deoxy-D-ribulos-1-ylimino)methylamino]-1-(5-phospho-beta-D-ribosyl)imidazole-4-carboxamide. Its pathway is amino-acid biosynthesis; L-histidine biosynthesis; L-histidine from 5-phospho-alpha-D-ribose 1-diphosphate: step 4/9. The sequence is that of 1-(5-phosphoribosyl)-5-[(5-phosphoribosylamino)methylideneamino] imidazole-4-carboxamide isomerase from Xylella fastidiosa (strain Temecula1 / ATCC 700964).